Consider the following 530-residue polypeptide: Alpha-(1,3)-fucosyltransferase 4 (530 aa).

Disordered stretches follow at residues methionine 1 to proline 48 and histidine 66 to alanine 112. Residues methionine 1–arginine 147 are Cytoplasmic-facing. The segment covering alanine 88 to cysteine 106 has biased composition (basic and acidic residues). The helical; Signal-anchor for type II membrane protein transmembrane segment at glycine 148 to tryptophan 172 threads the bilayer. The Lumenal portion of the chain corresponds to glycine 173 to arginine 530. N-linked (GlcNAc...) asparagine glycosylation is found at asparagine 216 and asparagine 315.

Belongs to the glycosyltransferase 10 family. Expressed at low levels in bone marrow-derived mesenchymal stem cells. In terms of tissue distribution, expressed in cord blood immature promyelocytes and in peripheral blood myeloid and lymphoid cell populations.

The protein localises to the golgi apparatus. Its subcellular location is the golgi stack membrane. It carries out the reaction a beta-D-galactosyl-(1-&gt;4)-N-acetyl-beta-D-glucosaminyl derivative + GDP-beta-L-fucose = a beta-D-galactosyl-(1-&gt;4)-[alpha-L-fucosyl-(1-&gt;3)]-N-acetyl-beta-D-glucosaminyl derivative + GDP + H(+). The enzyme catalyses an N-acetyl-alpha-neuraminyl-(2-&gt;3)-beta-D-galactosyl-(1-&gt;4)-N-acetyl-beta-D-glucosaminyl derivative + GDP-beta-L-fucose = an alpha-Neu5Ac-(2-&gt;3)-beta-D-Gal-(1-&gt;4)-[alpha-L-Fuc-(1-&gt;3)]-beta-D-GlcNAc derivative + GDP + H(+). The catalysed reaction is an alpha-Neu5Ac-(2-&gt;3)-beta-D-Gal-(1-&gt;4)-beta-D-GlcNAc-(1-&gt;3)-beta-D-Gal-(1-&gt;4)-beta-D-GlcNAc derivative + GDP-beta-L-fucose = an alpha-Neu5Ac-(2-&gt;3)-beta-D-Gal-(1-&gt;4)-beta-D-GlcNAc-(1-&gt;3)-beta-D-Gal-(1-&gt;4)-[alpha-L-Fuc-(1-&gt;3)]-beta-D-GlcNAc derivative + GDP + H(+). It catalyses the reaction an alpha-Neu5Ac-(2-&gt;3)-beta-D-Gal-(1-&gt;4)-beta-D-GlcNAc6S derivative + GDP-beta-L-fucose = an alpha-Neu5Ac-(2-&gt;3)-beta-D-Gal-(1-&gt;4)-[alpha-L-Fuc-(1-&gt;3)]-beta-D-GlcNAc6S derivative + GDP + H(+). It participates in protein modification; protein glycosylation. In terms of biological role, catalyzes alpha(1-&gt;3) linkage of fucosyl moiety transferred from GDP-beta-L-fucose to N-acetyl glucosamine (GlcNAc) within type 2 lactosamine (LacNAc, Gal-beta(1-&gt;4)GlcNAc) glycan attached to N- or O-linked glycoproteins. Robustly fucosylates nonsialylated distal LacNAc unit of the polylactosamine chain to form Lewis X antigen (CD15), a glycan determinant known to mediate important cellular functions in development and immunity. Fucosylates with lower efficiency sialylated LacNAc acceptors to form sialyl Lewis X and 6-sulfo sialyl Lewis X determinants that serve as recognition epitopes for C-type lectins. Together with FUT7 contributes to SELE, SELL and SELP selectin ligand biosynthesis and selectin-dependent lymphocyte homing, leukocyte migration and blood leukocyte homeostasis. In a cell type specific manner, may also fucosylate the internal LacNAc unit of the polylactosamine chain to form VIM-2 antigen that serves as recognition epitope for SELE. Functionally, does not generate Lewis X antigens. The chain is Alpha-(1,3)-fucosyltransferase 4 from Homo sapiens (Human).